Here is a 182-residue protein sequence, read N- to C-terminus: ADP-ribosylation factor-like protein 3 (182 aa).

The N-myristoyl glycine moiety is linked to residue G2. Residue S5 is modified to Phosphoserine. GTP-binding positions include 24–31, T48, 67–71, G70, 126–129, and 159–161; these read GLDNAGKT, DIGGQ, NKQD, and SAL. T31 and T48 together coordinate Mg(2+).

Belongs to the small GTPase superfamily. Arf family. As to quaternary structure, found in a complex with ARL3, RP2 and UNC119 (or UNC119B); RP2 induces hydrolysis of GTP ARL3 in the complex, leading to the release of UNC119 (or UNC119B). Interacts with RP2; interaction is direct and stimulated with the activated GTP-bound form of ARL3. Interacts with SYS1. Interacts with ARL2BP; the GTP-bound form interacts with ARL2BP. Microtubule-associated protein. Does not interact with TBCC. Interacts with RP2. Interacts with PDE6D; the interaction occurs specifically with the GTP-bound form of ARL3. Interacts with GGA1; the interaction recruits PKD1:PKD2 complex to trans-Golgi network and is required for ciliary targeting of PKD1:PKD2 complex. Interacts with DNAAF9.

Its subcellular location is the golgi apparatus membrane. The protein localises to the cytoplasm. It is found in the cytoskeleton. The protein resides in the spindle. It localises to the nucleus. Its subcellular location is the microtubule organizing center. The protein localises to the centrosome. It is found in the cell projection. The protein resides in the cilium. Functionally, small GTP-binding protein which cycles between an inactive GDP-bound and an active GTP-bound form, and the rate of cycling is regulated by guanine nucleotide exchange factors (GEF) and GTPase-activating proteins (GAP). Required for normal cytokinesis and cilia signaling. Requires assistance from GTPase-activating proteins (GAPs) like RP2 and PDE6D, in order to cycle between inactive GDP-bound and active GTP-bound forms. Required for targeting proteins to the cilium, including myristoylated NPHP3 and prenylated INPP5E. Targets NPHP3 to the ciliary membrane by releasing myristoylated NPHP3 from UNC119B cargo adapter into the cilium. Required for PKD1:PKD2 complex targeting from the trans-Golgi network to the cilium. The sequence is that of ADP-ribosylation factor-like protein 3 (ARL3) from Bos taurus (Bovine).